A 364-amino-acid polypeptide reads, in one-letter code: Chaperone protein DnaJ (364 aa).

The 66-residue stretch at 4 to 69 (DYYEILGLSK…NKKAKYDRFG (66 aa)) folds into the J domain. A CR-type zinc finger spans residues 135–213 (GYKNNINITR…CKGKGSLTKQ (79 aa)). Residues Cys-148, Cys-151, Cys-165, Cys-168, Cys-187, Cys-190, Cys-201, and Cys-204 each coordinate Zn(2+). 4 CXXCXGXG motif repeats span residues 148 to 155 (CDSCLGKK), 165 to 172 (CNMCNGSG), 187 to 194 (CSKCYGEG), and 201 to 208 (CKSCKGKG).

This sequence belongs to the DnaJ family. In terms of assembly, homodimer. Zn(2+) is required as a cofactor.

It is found in the cytoplasm. Functionally, participates actively in the response to hyperosmotic and heat shock by preventing the aggregation of stress-denatured proteins and by disaggregating proteins, also in an autonomous, DnaK-independent fashion. Unfolded proteins bind initially to DnaJ; upon interaction with the DnaJ-bound protein, DnaK hydrolyzes its bound ATP, resulting in the formation of a stable complex. GrpE releases ADP from DnaK; ATP binding to DnaK triggers the release of the substrate protein, thus completing the reaction cycle. Several rounds of ATP-dependent interactions between DnaJ, DnaK and GrpE are required for fully efficient folding. Also involved, together with DnaK and GrpE, in the DNA replication of plasmids through activation of initiation proteins. This chain is Chaperone protein DnaJ, found in Borreliella burgdorferi (strain ATCC 35210 / DSM 4680 / CIP 102532 / B31) (Borrelia burgdorferi).